We begin with the raw amino-acid sequence, 199 residues long: ATP-dependent Clp protease proteolytic subunit 2 (199 aa).

Ser98 acts as the Nucleophile in catalysis. The active site involves His123.

The protein belongs to the peptidase S14 family. Fourteen ClpP subunits assemble into 2 heptameric rings which stack back to back to give a disk-like structure with a central cavity, resembling the structure of eukaryotic proteasomes.

The protein localises to the cytoplasm. It catalyses the reaction Hydrolysis of proteins to small peptides in the presence of ATP and magnesium. alpha-casein is the usual test substrate. In the absence of ATP, only oligopeptides shorter than five residues are hydrolyzed (such as succinyl-Leu-Tyr-|-NHMec, and Leu-Tyr-Leu-|-Tyr-Trp, in which cleavage of the -Tyr-|-Leu- and -Tyr-|-Trp bonds also occurs).. Its function is as follows. Cleaves peptides in various proteins in a process that requires ATP hydrolysis. Has a chymotrypsin-like activity. Plays a major role in the degradation of misfolded proteins. The sequence is that of ATP-dependent Clp protease proteolytic subunit 2 from Treponema pallidum (strain Nichols).